The chain runs to 205 residues: MECMASTEESLPASSSMDSCSGELPTTTTTAPAQSTASSGCRPPATAAKRRSLISTDLRLGLTLSSVVHIDGNNPSTPRSSLTTATVTADRGGGGGGHGRRRSLFVKVYMEGVPIGRKLDLLPLDGYKGLVARLASMFRASITYHHCHRQFAVVGMKTNKVHHVLTYEDQEGDWMMAGDVPWELFLTSVKRLRIARADDKYCYSC.

Positions 1–48 (MECMASTEESLPASSSMDSCSGELPTTTTTAPAQSTASSGCRPPATAA) are disordered. Residues 7 to 19 (TEESLPASSSMDS) show a composition bias toward polar residues. Over residues 25-39 (PTTTTTAPAQSTASS) the composition is skewed to low complexity. An EAR-like (transcriptional repression) motif is present at residues 58–62 (LRLGL). The interval 71–98 (DGNNPSTPRSSLTTATVTADRGGGGGGH) is disordered. A compositionally biased stretch (polar residues) spans 73 to 87 (NNPSTPRSSLTTATV). The PB1 domain maps to 103-199 (SLFVKVYMEG…KRLRIARADD (97 aa)).

It belongs to the Aux/IAA family. As to quaternary structure, homodimers and heterodimers. Highly expressed in green shoots. Expressed in flowers.

The protein localises to the nucleus. Functionally, aux/IAA proteins are short-lived transcriptional factors that function as repressors of early auxin response genes at low auxin concentrations. The chain is Auxin-responsive protein IAA8 (IAA8) from Oryza sativa subsp. japonica (Rice).